The following is an 86-amino-acid chain: RNA-binding protein Hfq (86 aa).

Positions 9–68 (DPFLNALRRERIPVSIYLVNGIKLQGQIESFDQFVILLKNTVNQMVYKHAISTVVPARPV) constitute a Sm domain. The disordered stretch occupies residues 65 to 86 (ARPVSHHSGERGSDRPSEKSED). Residues 71–86 (HSGERGSDRPSEKSED) show a composition bias toward basic and acidic residues.

This sequence belongs to the Hfq family. In terms of assembly, homohexamer.

Its function is as follows. RNA chaperone that binds small regulatory RNA (sRNAs) and mRNAs to facilitate mRNA translational regulation in response to envelope stress, environmental stress and changes in metabolite concentrations. Also binds with high specificity to tRNAs. This Vibrio vulnificus (strain YJ016) protein is RNA-binding protein Hfq.